The chain runs to 159 residues: Phosphopantetheine adenylyltransferase (159 aa).

Residue Thr-8 coordinates substrate. ATP is bound by residues 8–9 (TF) and His-16. Residues Lys-40, Thr-72, and Arg-86 each contribute to the substrate site. Residues 87–89 (GLR), Glu-97, and 122–128 (YSFLSSS) each bind ATP.

The protein belongs to the bacterial CoaD family. As to quaternary structure, homohexamer. The cofactor is Mg(2+).

The protein resides in the cytoplasm. It carries out the reaction (R)-4'-phosphopantetheine + ATP + H(+) = 3'-dephospho-CoA + diphosphate. It functions in the pathway cofactor biosynthesis; coenzyme A biosynthesis; CoA from (R)-pantothenate: step 4/5. Functionally, reversibly transfers an adenylyl group from ATP to 4'-phosphopantetheine, yielding dephospho-CoA (dPCoA) and pyrophosphate. The protein is Phosphopantetheine adenylyltransferase of Prochlorococcus marinus subsp. pastoris (strain CCMP1986 / NIES-2087 / MED4).